Consider the following 109-residue polypeptide: Heterogeneous nuclear ribonucleoprotein-like protein HD40 (109 aa).

Residues glutamate 1–valine 36 form a disordered region. Positions valine 23–valine 36 are enriched in basic and acidic residues. An RRM domain is found at glutamate 40–serine 50. An asymmetric dimethylarginine mark is found at arginine 102 and arginine 105.

The protein localises to the cytoplasm. It localises to the nucleus. The polypeptide is Heterogeneous nuclear ribonucleoprotein-like protein HD40 (Artemia salina (Brine shrimp)).